The following is a 578-amino-acid chain: Vitelline membrane-like protein (578 aa).

The N-terminal stretch at 1–21 is a signal peptide; sequence MCGRRLLFLAAFGCLLANAFS. Residues 72–452 are 45 X 8 AA approximate tandem repeats of [PS]-[AS]-Y-S-A-P-A-[AS]; the sequence is QGYSAPAAPV…AAPSYSAPAS (381 aa). Disordered regions lie at residues 133 to 442 and 487 to 514; these read ASSS…YSAP and SGSP…ASKS. The region spanning 549 to 578 is the VM domain; it reads SLPSPPCPKNYVFSCSSVFTPAPCSQGYGY.

Interacts with Vm26Aa and Vm26Ab; forms part of a disulfide-linked network within the vitelline membrane of stage 10 egg chambers. In terms of processing, becomes part of a disulfide-linked network including other vitelline membrane proteins, including Vm26Aa and Vm26Ab, during vitelline membrane biogenesis and maturation. Sulfated by pip; probably involved in embryo dorsal-ventral axis determination. Sulfation by pip may occur on covalently bound glycosaminoglycans. As to expression, secreted into the perivitelline space and becomes stably incorporated into the vitelline membrane (at protein level). Expressed throughout the follicle cell layer of stage 10 egg chambers.

It is found in the secreted. The protein localises to the extracellular space. It localises to the extracellular matrix. Functionally, major early eggshell protein secreted by folicle cells into the perivitelline space and incorporated into the vitelline membrane. Localized sulfation by pip may be involved in embryo dorsal-ventral axis determination. This chain is Vitelline membrane-like protein, found in Drosophila melanogaster (Fruit fly).